The following is a 203-amino-acid chain: N-(5'-phosphoribosyl)anthranilate isomerase (203 aa).

The protein belongs to the TrpF family.

It catalyses the reaction N-(5-phospho-beta-D-ribosyl)anthranilate = 1-(2-carboxyphenylamino)-1-deoxy-D-ribulose 5-phosphate. The protein operates within amino-acid biosynthesis; L-tryptophan biosynthesis; L-tryptophan from chorismate: step 3/5. The chain is N-(5'-phosphoribosyl)anthranilate isomerase from Thermoanaerobacter pseudethanolicus (strain ATCC 33223 / 39E) (Clostridium thermohydrosulfuricum).